The chain runs to 255 residues: Hydroxyacylglutathione hydrolase (255 aa).

Positions 56, 58, 60, 61, 114, 133, and 171 each coordinate Zn(2+).

The protein belongs to the metallo-beta-lactamase superfamily. Glyoxalase II family. As to quaternary structure, monomer. The cofactor is Zn(2+).

The catalysed reaction is an S-(2-hydroxyacyl)glutathione + H2O = a 2-hydroxy carboxylate + glutathione + H(+). Its pathway is secondary metabolite metabolism; methylglyoxal degradation; (R)-lactate from methylglyoxal: step 2/2. In terms of biological role, thiolesterase that catalyzes the hydrolysis of S-D-lactoyl-glutathione to form glutathione and D-lactic acid. This Cereibacter sphaeroides (strain ATCC 17025 / ATH 2.4.3) (Rhodobacter sphaeroides) protein is Hydroxyacylglutathione hydrolase.